We begin with the raw amino-acid sequence, 477 residues long: Dihydrolipoyl dehydrogenase (477 aa).

FAD is bound by residues 41 to 50, lysine 59, glycine 124, and 153 to 155; these read EKRGALGGTC and TGS. Residues cysteine 50 and cysteine 55 are joined by a disulfide bond. NAD(+)-binding positions include 190–197, glutamate 213, valine 248, and glycine 282; that span reads GGGVIGLE. FAD-binding positions include aspartate 323 and 330–333; that span reads MLAH. Residue histidine 456 is the Proton acceptor of the active site.

The protein belongs to the class-I pyridine nucleotide-disulfide oxidoreductase family. In terms of assembly, homodimer. The cofactor is FAD.

The enzyme catalyses N(6)-[(R)-dihydrolipoyl]-L-lysyl-[protein] + NAD(+) = N(6)-[(R)-lipoyl]-L-lysyl-[protein] + NADH + H(+). This is Dihydrolipoyl dehydrogenase (LPD) from Trypanosoma cruzi.